We begin with the raw amino-acid sequence, 261 residues long: 3beta-hydroxysteroid dehydrogenase 1 (261 aa).

NAD(+) contacts are provided by residues 65-66 (DV), N92, Y158, and K162. Residue Y158 is the Proton acceptor of the active site.

It belongs to the short-chain dehydrogenases/reductases (SDR) family.

It carries out the reaction 3-oxo-5beta-cholan-24-oate + NADH + H(+) = isolithocholate + NAD(+). It catalyses the reaction 12alpha-hydroxy-3-oxo-5beta-cholan-24-oate + NADH + H(+) = isodeoxycholate + NAD(+). The enzyme catalyses 7alpha,12alpha-dihydroxy-3-oxo-5beta-cholan-24-oate + NADH + H(+) = isocholate + NAD(+). The catalysed reaction is 3-oxochenodeoxycholate + NADH + H(+) = isochenodeoxycholate + NAD(+). Functionally, involved in the modification of secondary bile acids into iso-bile acids (3beta-bile acids) via epimerization of the 3-OH group through a 3-oxo-intermediate. Catalyzes the reduction of 12-alpha-hydroxy-3-oxo-5-beta-cholan-24-oate (3-oxo-DCA) and 3-oxo-5-beta-cholan-24-oate (3-oxo-LCA) to yield isodeoxycholate (isoDCA) and isolithocholate (isoLCA), respectively. Is also able to catalyze the reduction of 3-dehydrocholate (3-oxo-CA or 7alpha,12alpha-dihydroxy-3-oxo-5beta-cholan-24-oate) and 7-alpha-hydroxy-3-oxo-5-beta-cholan-24-oate (3-oxo-CDCA), into isocholate (isoCA) and isochenodeoxycholate (isoCDCA), respectively. Prefers NADH to NADPH as cosubstrate. The conversion of the abundant bile acid deoxycholate (DCA) into isoDCA by the gut bacterium E.lenta favors the growth of the keystone commensal genus Bacteroides, since isoDCA is less cytotoxic than its parent compound, DCA; iso-bile acids have thus a potential role in modulating gut community composition. This is 3beta-hydroxysteroid dehydrogenase 1 from Eggerthella lenta (strain ATCC 25559 / DSM 2243 / CCUG 17323 / JCM 9979 / KCTC 3265 / NCTC 11813 / VPI 0255 / 1899 B) (Eubacterium lentum).